Here is a 515-residue protein sequence, read N- to C-terminus: Cytochrome P450 76C3 (515 aa).

A helical transmembrane segment spans residues 5–25; the sequence is LIQGMSLPLYFLLTLFFFFFA. Residue Cys-451 participates in heme binding.

The protein belongs to the cytochrome P450 family. Heme is required as a cofactor.

The protein localises to the membrane. The sequence is that of Cytochrome P450 76C3 (CYP76C3) from Arabidopsis thaliana (Mouse-ear cress).